The sequence spans 229 residues: Prolactin (229 aa).

An N-terminal signal peptide occupies residues 1 to 30 (MDSKGSAQKGSRLLLLLVVSNLLLCQGVVS). Cysteines 34 and 41 form a disulfide. A Phosphoserine modification is found at Ser-56. An N-linked (GlcNAc...) asparagine; partial glycan is attached at Asn-61. 2 positions are modified to phosphoserine: Ser-64 and Ser-120. Cystine bridges form between Cys-88-Cys-204 and Cys-221-Cys-229.

The protein belongs to the somatotropin/prolactin family. In terms of assembly, interacts with PRLR.

Its subcellular location is the secreted. Its function is as follows. Prolactin acts primarily on the mammary gland by promoting lactation, mammogenesis, mitogenesis and osmoregulation. This Ovis aries (Sheep) protein is Prolactin (PRL).